A 310-amino-acid polypeptide reads, in one-letter code: Thioesterase pytI (310 aa).

2 helical membrane-spanning segments follow: residues 14–34 (SLTP…YFAL) and 95–115 (LLGG…IFVA). The tract at residues 168–195 (TLSDDASTTTSSDNSRASTDHGADSEVE) is disordered. Residues 170–184 (SDDASTTTSSDNSRA) show a composition bias toward low complexity.

The protein belongs to the AMT4 thioesterase family.

The protein localises to the membrane. The protein operates within secondary metabolite biosynthesis. Functionally, thioesterase; part of the gene cluster that mediates the biosynthesis of pyranterreones, a family of antioxidative compounds. The first step of pyranonigrins biosynthesis is performed by the hybrid PKS-NRPS synthetase pytA that condenses 4 malonyl-CoA units ato the acetyl starter unit by the modular PKS of pytA. The acyl chain is then connected to an L-serine through the amide bond by the modular NRPS of pytA. A tetramic acid is formed and released from the PKS-NRPS pytA to give pyranterreone 5 with the help of the thioesterase pytI. Pyranterreone 5 could be methylated by pytC to afford pyranterreone 6. Both pyranterreones 5 and 6 are subsequently oxidized by the FAD-linked oxidoreductase pytB and the cytochrome P450 monooxygenase pytD to form the fused gamma-pyrone core, resulting in pyranterreones 7 and 11, respectively. The hydroxy group at C-8 of pyranterreones 7 and 11 are dehydrated by the aspartyl protease pytH to form a delta-7 double bond to give pyranterreones 3 and 1, 2 accordingly. The exo-methylene of pyranterreone 3 could be reduced into a pendant methyl by reductase pytE to provide pyranterreone 4, also known as cordylactam. Pyranterreone 4 can be reconverted to pyranterreone 3 through pytB-catalyzed dehydrogenation or further oxidized to pyranterreones 9 and 10. The sequence is that of Thioesterase pytI from Aspergillus terreus.